Reading from the N-terminus, the 140-residue chain is Nucleoside diphosphate kinase (140 aa).

ATP is bound by residues Lys9, Phe57, Arg85, Thr91, Arg102, and Asn112. His115 (pros-phosphohistidine intermediate) is an active-site residue.

Belongs to the NDK family. As to quaternary structure, homotetramer. It depends on Mg(2+) as a cofactor.

The protein localises to the cytoplasm. The catalysed reaction is a 2'-deoxyribonucleoside 5'-diphosphate + ATP = a 2'-deoxyribonucleoside 5'-triphosphate + ADP. It carries out the reaction a ribonucleoside 5'-diphosphate + ATP = a ribonucleoside 5'-triphosphate + ADP. Major role in the synthesis of nucleoside triphosphates other than ATP. The ATP gamma phosphate is transferred to the NDP beta phosphate via a ping-pong mechanism, using a phosphorylated active-site intermediate. The sequence is that of Nucleoside diphosphate kinase from Chlorobium chlorochromatii (strain CaD3).